Reading from the N-terminus, the 154-residue chain is Photosystem II extrinsic protein U, chloroplastic (154 aa).

The transit peptide at 1–36 (MAFISTPLGKVTVKSATVSANRRGLRMQSDSEPVVS) directs the protein to the chloroplast. Residues 37–61 (RRALLSGALAAAVAAALARARPAQA) constitute a thylakoid transit peptide.

This sequence belongs to the PsbU family. As to quaternary structure, PSII is composed of 1 copy each of membrane proteins PsbA, PsbB, PsbC, PsbD, PsbE, PsbF, PsbH, PsbI, PsbJ, PsbK, PsbL, PsbM, PsbT, PsbY, PsbZ, Psb30/Ycf12, at least 3 peripheral proteins of the oxygen-evolving complex and a large number of cofactors. It forms dimeric complexes. The extrinsic subunits in red algae are PsbO (OEC33), PsbQ', cytochrome c-550 and PsbU. Post-translationally, predicted to be translocated into the thylakoid lumen by the Tat system. The position of the first transit peptide cleavage has not been experimentally proven.

Its subcellular location is the plastid. It localises to the chloroplast thylakoid membrane. In terms of biological role, one of the extrinsic, lumenal subunits of photosystem II (PSII). PSII is a light-driven water plastoquinone oxidoreductase, using light energy to abstract electrons from H(2)O, generating a proton gradient subsequently used for ATP formation. The extrinsic proteins stabilize the structure of photosystem II oxygen-evolving complex (OEC), the ion environment of oxygen evolution and protect the OEC against heat-induced inactivation. The protein is Photosystem II extrinsic protein U, chloroplastic of Cyanidium caldarium (Red alga).